Consider the following 157-residue polypeptide: uncharacterized protein (157 aa).

Residues 36-63 (QIEELNELCQFFNISLTYTRESLEELEN) are a coiled coil.

This is an uncharacterized protein from Bacillus subtilis (strain 168).